The sequence spans 615 residues: Delta(14)-sterol reductase LBR (615 aa).

A Tudor domain is found at 1 to 62 (MPSRKFADGE…DIKPLTSFRQ (62 aa)). Residues 1-211 (MPSRKFADGE…IRAKDLEFGG (211 aa)) lie on the Nuclear side of the membrane. The tract at residues 53–109 (DIKPLTSFRQRKGGSTSSSPSRRRGSRSRSRSRSPGRPPKSARRSASASHQADIKEA) is disordered. Lys-55 carries the post-translational modification N6-acetyllysine. Thr-58 carries the phosphothreonine modification. Residues Ser-59 and Ser-67 each carry the phosphoserine modification. Phosphoserine; by CDK1 is present on residues Ser-71 and Ser-86. Residues 73-86 (SRRRGSRSRSRSRS) are compositionally biased toward basic residues. Residues Ser-97 and Ser-99 each carry the phosphoserine modification. Thr-118 is subject to Phosphothreonine. Phosphoserine is present on Ser-128. Phosphothreonine is present on Thr-200. Transmembrane regions (helical) follow at residues 212-232 (VPGV…LLLM), 258-278 (VFGV…LPIG), 299-319 (FYAF…GVEF), 326-346 (FLQF…YLYM), 415-435 (VPSL…VDAL), 447-467 (IIHD…VPFI), 481-501 (EVSW…YVIF), and 561-581 (ACGF…MLLV). Residues Lys-594 and Lys-601 each carry the N6-acetyllysine modification.

Belongs to the ERG4/ERG24 family. As to quaternary structure, interacts with CBX5. Interacts with DNA. Interaction with DNA is sequence independent with higher affinity for supercoiled and relaxed circular DNA than linear DNA. Interacts with lamin B. Interacts with CLNK. Interacts with TMEM147; promoting LBR localization to the nucleus inner membrane. Post-translationally, phosphorylated by CDK1 in mitosis when the inner nuclear membrane breaks down into vesicles that dissociate from the lamina and the chromatin. It is phosphorylated by different protein kinases in interphase when the membrane is associated with these structures. Phosphorylation of LBR and HP1 proteins may be responsible for some of the alterations in chromatin organization and nuclear structure which occur at various times during the cell cycle. Phosphorylated by SRPK1. In late anaphase LBR is dephosphorylated, probably by PP1 and/or PP2A, allowing reassociation with chromatin.

The protein resides in the nucleus inner membrane. Its subcellular location is the nucleus. It localises to the cytoplasm. It is found in the endoplasmic reticulum membrane. The enzyme catalyses 5alpha-cholest-8,14-dien-3beta-ol + NADPH + H(+) = 5alpha-cholest-8-en-3beta-ol + NADP(+). It carries out the reaction 4,4-dimethyl-5alpha-cholesta-8,24-dien-3beta-ol + NADP(+) = 4,4-dimethyl-5alpha-cholesta-8,14,24-trien-3beta-ol + NADPH + H(+). The catalysed reaction is 4,4-dimethyl-8,14-cholestadien-3beta-ol + NADPH + H(+) = 4,4-dimethyl-5alpha-cholest-8-en-3beta-ol + NADP(+). The protein operates within steroid biosynthesis; cholesterol biosynthesis. In terms of biological role, catalyzes the reduction of the C14-unsaturated bond of lanosterol, as part of the metabolic pathway leading to cholesterol biosynthesis. Plays a critical role in myeloid cell cholesterol biosynthesis which is essential to both myeloid cell growth and functional maturation. Mediates the activation of NADPH oxidases, perhaps by maintaining critical levels of cholesterol required for membrane lipid raft formation during neutrophil differentiation. Anchors the lamina and the heterochromatin to the inner nuclear membrane. The protein is Delta(14)-sterol reductase LBR (LBR) of Pongo abelii (Sumatran orangutan).